The chain runs to 115 residues: Large ribosomal subunit protein bL31B (115 aa).

This sequence belongs to the bacterial ribosomal protein bL31 family. Type B subfamily. As to quaternary structure, part of the 50S ribosomal subunit.

This Polynucleobacter asymbioticus (strain DSM 18221 / CIP 109841 / QLW-P1DMWA-1) (Polynucleobacter necessarius subsp. asymbioticus) protein is Large ribosomal subunit protein bL31B.